Consider the following 167-residue polypeptide: N-alpha-acetyltransferase (167 aa).

Residues 12–167 form the N-acetyltransferase domain; it reads FTLRNARMDD…EDAYLMARPL (156 aa). Tyrosine 37 is a substrate binding site. Histidine 88 contributes to the Zn(2+) binding site. Acetyl-CoA contacts are provided by residues 92–94 and 100–105; these read IAV and RKGIAT. Glutamate 127 lines the Zn(2+) pocket. Residues asparagine 132 and 139 to 141 each bind acetyl-CoA; that span reads YEK. Position 154 (tyrosine 154) interacts with substrate.

The protein belongs to the acetyltransferase family. ARD1 subfamily. Homodimer.

It localises to the cytoplasm. It catalyses the reaction N-terminal L-alanyl-[protein] + acetyl-CoA = N-terminal N(alpha)-acetyl-L-alanyl-[protein] + CoA + H(+). It carries out the reaction N-terminal L-seryl-[protein] + acetyl-CoA = N-terminal N(alpha)-acetyl-L-seryl-[protein] + CoA + H(+). The catalysed reaction is N-terminal L-methionyl-L-leucyl-[protein] + acetyl-CoA = N-terminal N(alpha)-acetyl-L-methionyl-L-leucyl-[protein] + CoA + H(+). The enzyme catalyses N-terminal L-methionyl-L-glutamyl-[protein] + acetyl-CoA = N-terminal N(alpha)-acetyl-L-methionyl-L-glutamyl-[protein] + CoA + H(+). In terms of biological role, displays alpha (N-terminal) acetyltransferase activity. Catalyzes the covalent attachment of an acetyl moiety from acetyl-CoA to the free alpha-amino group at the N-terminus of a protein. NAT is able to acetylate the alpha-amino group of methionine, alanine and serine N-terminal residue substrates, however it has a preference for Ser-N-terminal substrates. The chain is N-alpha-acetyltransferase from Saccharolobus solfataricus (strain ATCC 35092 / DSM 1617 / JCM 11322 / P2) (Sulfolobus solfataricus).